Here is a 558-residue protein sequence, read N- to C-terminus: Formate--tetrahydrofolate ligase (558 aa).

66-73 (TPAGEGKT) provides a ligand contact to ATP.

The protein belongs to the formate--tetrahydrofolate ligase family.

The catalysed reaction is (6S)-5,6,7,8-tetrahydrofolate + formate + ATP = (6R)-10-formyltetrahydrofolate + ADP + phosphate. It functions in the pathway one-carbon metabolism; tetrahydrofolate interconversion. The sequence is that of Formate--tetrahydrofolate ligase from Neisseria meningitidis serogroup C / serotype 2a (strain ATCC 700532 / DSM 15464 / FAM18).